The chain runs to 298 residues: GTP cyclohydrolase FolE2 (298 aa).

The protein belongs to the GTP cyclohydrolase IV family.

It carries out the reaction GTP + H2O = 7,8-dihydroneopterin 3'-triphosphate + formate + H(+). It functions in the pathway cofactor biosynthesis; 7,8-dihydroneopterin triphosphate biosynthesis; 7,8-dihydroneopterin triphosphate from GTP: step 1/1. Functionally, converts GTP to 7,8-dihydroneopterin triphosphate. In Pseudomonas aeruginosa (strain LESB58), this protein is GTP cyclohydrolase FolE2.